Reading from the N-terminus, the 115-residue chain is U3-lycotoxin-Ls1f (115 aa).

Positions 1 to 20 (MKFVLLFGVLLVTLFSYSSA) are cleaved as a signal peptide. A propeptide spanning residues 21–44 (EMLDDFDQADEDELLSLIEKEEAR) is cleaved from the precursor. 4 disulfides stabilise this stretch: Cys48–Cys63, Cys55–Cys72, Cys62–Cys87, and Cys74–Cys85.

It belongs to the neurotoxin 19 (CSTX) family. 01 subfamily. Expressed by the venom gland.

Its subcellular location is the secreted. In Lycosa singoriensis (Wolf spider), this protein is U3-lycotoxin-Ls1f.